The sequence spans 488 residues: Protein DETOXIFICATION 35 (488 aa).

The next 12 membrane-spanning stretches (helical) occupy residues 38–58, 73–93, 121–141, 150–170, 187–207, 218–238, 262–282, 296–316, 336–356, 379–401, 408–428, and 439–459; these read LWMI…VSSV, AVSI…LGMG, IILF…TPVL, IAVP…SLAF, IAWI…LFII, LAFN…VIGW, IASA…IVLT, SICM…NAAI, VYVT…AIII, AYLL…VAVG, VAYI…YLLG, and WSGM…VLYK.

This sequence belongs to the multi antimicrobial extrusion (MATE) (TC 2.A.66.1) family. In terms of tissue distribution, highly expressed in inflorescence tissues, especially in floral epidermal guard cells including those of the anthers, stigma, siliques and nectaries. Also detected in the meristematic zone of the root apex and in the elongation zone through to the fully expanded cells of the differentiation zone.

It localises to the vacuole membrane. Its function is as follows. Multidrug and toxin efflux transporter involved in flavonoid metabolism. Required for proper reproductive development. This chain is Protein DETOXIFICATION 35, found in Arabidopsis thaliana (Mouse-ear cress).